We begin with the raw amino-acid sequence, 847 residues long: Mitogen-activated protein kinase kinase kinase 11 (847 aa).

The residue at position 11 (S11) is a Phosphoserine. Residues 11-38 form a disordered region; the sequence is SPLGSWNGSGSGGGGGGGGGRPEGSPKA. The span at 17–32 shows a compositional bias: gly residues; that stretch reads NGSGSGGGGGGGGGRP. S35 is subject to Phosphoserine. The SH3 domain maps to 41–105; the sequence is YANPVWTALF…PSNYVSRGGG (65 aa). Residues 117–379 enclose the Protein kinase domain; it reads LRLEEVIGIG…ASILQQLEAL (263 aa). ATP is bound by residues 123-131 and K144; that span reads IGIGGFGKV. D241 acts as the Proton acceptor in catalysis. T277 is subject to Phosphothreonine; by autocatalysis. S281 bears the Phosphoserine; by autocatalysis and MAP4K1 mark. Phosphoserine is present on S394. Leucine-zipper stretches follow at residues 403–424 and 438–459; these read IQGL…EEEL and LRRR…ELTL. 5 positions are modified to phosphoserine: S507, S524, S548, S555, and S556. Residues 537–643 are disordered; that stretch reads PAEPGQAWGR…SSGTPKLIQR (107 aa). Residues 550–562 show a composition bias toward basic and acidic residues; the sequence is RRLEDSSNGERRA. A compositionally biased stretch (low complexity) spans 597-609; the sequence is SSPLGSPSTPPAL. Residues S654, S693, and S705 each carry the phosphoserine modification. The interval 655-847 is disordered; the sequence is LGLGRDLQPP…QAPWVPEAGP (193 aa). Positions 676-694 are enriched in pro residues; sequence TTPPTPTPAPCPTEPPPSP. A Phosphothreonine modification is found at T708. S724, S727, S740, S748, S758, S770, S789, S793, and S815 each carry phosphoserine. Residues 760–773 are compositionally biased toward low complexity; that stretch reads PLGLISRPRPSPLR. A compositionally biased stretch (pro residues) spans 787–799; it reads RPSPLPSPQPAPR. A compositionally biased stretch (low complexity) spans 800 to 816; the sequence is RAPWTLFPDSDPFWDSP.

It belongs to the protein kinase superfamily. STE Ser/Thr protein kinase family. MAP kinase kinase kinase subfamily. Homodimer; undergoes dimerization during activation. Interacts with MAP2K4/MKK4. Interacts with MAP2K7/MKK7. Found in a complex with SH3RF1, RAC1, MAP2K7/MKK7, MAPK8IP1/JIP1 and MAPK8/JNK1. Mg(2+) is required as a cofactor. In terms of processing, autophosphorylation on serine and threonine residues within the activation loop plays a role in enzyme activation. Thr-277 is likely to be the main autophosphorylation site. Phosphorylation of Ser-555 and Ser-556 is induced by CDC42. In terms of tissue distribution, expressed in a wide variety of normal and neoplastic tissues including fetal lung, liver, heart and kidney, and adult lung, liver, heart, kidney, placenta, skeletal muscle, pancreas and brain.

It is found in the cytoplasm. The protein localises to the cytoskeleton. It localises to the microtubule organizing center. Its subcellular location is the centrosome. It carries out the reaction L-seryl-[protein] + ATP = O-phospho-L-seryl-[protein] + ADP + H(+). It catalyses the reaction L-threonyl-[protein] + ATP = O-phospho-L-threonyl-[protein] + ADP + H(+). Its activity is regulated as follows. Homodimerization via the leucine zipper domains is required for autophosphorylation and subsequent activation. In terms of biological role, activates the JUN N-terminal pathway. Required for serum-stimulated cell proliferation and for mitogen and cytokine activation of MAPK14 (p38), MAPK3 (ERK) and MAPK8 (JNK1) through phosphorylation and activation of MAP2K4/MKK4 and MAP2K7/MKK7. Plays a role in mitogen-stimulated phosphorylation and activation of BRAF, but does not phosphorylate BRAF directly. Influences microtubule organization during the cell cycle. The protein is Mitogen-activated protein kinase kinase kinase 11 of Homo sapiens (Human).